Here is a 342-residue protein sequence, read N- to C-terminus: MQFIDQAQIEVEAGKGGDGIVAFRREKYVPAGGPSGGNGGRGGSVVFVAVENLQTLLDFRYKHIFKADDGGRGGPNNCTGASGKDLIVQVPCGTTIYDAETGDLLGDLTQPNQQLLIAAGGKGGLGNQYFLSNRNRAPEYSLPGLPGERKLLRLELKLLAEVGIIGLPNAGKSTLISSLSAARPKIADYPFTTLIPNLGVVRKPTGDGTVFADIPGLIEGAADGAGLGHDFLRHIERTRVLLHLIDATSDDVIRDYNTIEQELQAYGRGLSERMQIVALNKIDAVDRETVDLDALATQLNHLSHAPVFLISAVTRTGLEPMLQEVWGILDQVNALEEAEVFR.

An Obg domain is found at 1–159 (MQFIDQAQIE…KLLRLELKLL (159 aa)). Positions 160 to 330 (AEVGIIGLPN…MLQEVWGILD (171 aa)) constitute an OBG-type G domain. GTP contacts are provided by residues 166–173 (GLPNAGKS), 191–195 (FTTLI), 213–216 (DIPG), 280–283 (NKID), and 311–313 (SAV). Mg(2+) is bound by residues Ser-173 and Thr-193.

Belongs to the TRAFAC class OBG-HflX-like GTPase superfamily. OBG GTPase family. In terms of assembly, monomer. Requires Mg(2+) as cofactor.

The protein localises to the cytoplasm. In terms of biological role, an essential GTPase which binds GTP, GDP and possibly (p)ppGpp with moderate affinity, with high nucleotide exchange rates and a fairly low GTP hydrolysis rate. Plays a role in control of the cell cycle, stress response, ribosome biogenesis and in those bacteria that undergo differentiation, in morphogenesis control. The polypeptide is GTPase Obg (Trichormus variabilis (strain ATCC 29413 / PCC 7937) (Anabaena variabilis)).